We begin with the raw amino-acid sequence, 188 residues long: Holliday junction branch migration complex subunit RuvA (188 aa).

The interval 1–64 (MIAGISGRVL…QDGITLYGFS (64 aa)) is domain I. Residues 65–143 (NEMKKELFLS…SAGIKDMRIY (79 aa)) are domain II. Tyr143 is a region of interest (flexible linker). Positions 143–186 (YHESLEALVSLGYPEKQAREAVKQVYREGMKTSELIKEALKFLS) are domain III.

It belongs to the RuvA family. In terms of assembly, homotetramer. Forms an RuvA(8)-RuvB(12)-Holliday junction (HJ) complex. HJ DNA is sandwiched between 2 RuvA tetramers; dsDNA enters through RuvA and exits via RuvB. An RuvB hexamer assembles on each DNA strand where it exits the tetramer. Each RuvB hexamer is contacted by two RuvA subunits (via domain III) on 2 adjacent RuvB subunits; this complex drives branch migration. In the full resolvosome a probable DNA-RuvA(4)-RuvB(12)-RuvC(2) complex forms which resolves the HJ.

Its subcellular location is the cytoplasm. Functionally, the RuvA-RuvB-RuvC complex processes Holliday junction (HJ) DNA during genetic recombination and DNA repair, while the RuvA-RuvB complex plays an important role in the rescue of blocked DNA replication forks via replication fork reversal (RFR). RuvA specifically binds to HJ cruciform DNA, conferring on it an open structure. The RuvB hexamer acts as an ATP-dependent pump, pulling dsDNA into and through the RuvAB complex. HJ branch migration allows RuvC to scan DNA until it finds its consensus sequence, where it cleaves and resolves the cruciform DNA. Promotes Holliday junction (HJ) branch migration in conjunction with RuvB. The chain is Holliday junction branch migration complex subunit RuvA from Thermotoga maritima (strain ATCC 43589 / DSM 3109 / JCM 10099 / NBRC 100826 / MSB8).